Here is a 340-residue protein sequence, read N- to C-terminus: Ketol-acid reductoisomerase (NADP(+)) (340 aa).

The region spanning 3–183 is the KARI N-terminal Rossmann domain; the sequence is VSIYYDKDCD…GGGRTGIIET (181 aa). NADP(+) contacts are provided by residues 26 to 29, lysine 49, serine 54, and 84 to 87; these read FGSQ and DEIQ. The active site involves histidine 109. Glycine 135 is an NADP(+) binding site. The 146-residue stretch at 184–329 folds into the KARI C-terminal knotted domain; the sequence is TFKAETETDL…RELRAMMPWI (146 aa). 4 residues coordinate Mg(2+): aspartate 192, glutamate 196, glutamate 228, and glutamate 232. Serine 253 contacts substrate.

This sequence belongs to the ketol-acid reductoisomerase family. Mg(2+) serves as cofactor.

It carries out the reaction (2R)-2,3-dihydroxy-3-methylbutanoate + NADP(+) = (2S)-2-acetolactate + NADPH + H(+). It catalyses the reaction (2R,3R)-2,3-dihydroxy-3-methylpentanoate + NADP(+) = (S)-2-ethyl-2-hydroxy-3-oxobutanoate + NADPH + H(+). Its pathway is amino-acid biosynthesis; L-isoleucine biosynthesis; L-isoleucine from 2-oxobutanoate: step 2/4. It functions in the pathway amino-acid biosynthesis; L-valine biosynthesis; L-valine from pyruvate: step 2/4. Functionally, involved in the biosynthesis of branched-chain amino acids (BCAA). Catalyzes an alkyl-migration followed by a ketol-acid reduction of (S)-2-acetolactate (S2AL) to yield (R)-2,3-dihydroxy-isovalerate. In the isomerase reaction, S2AL is rearranged via a Mg-dependent methyl migration to produce 3-hydroxy-3-methyl-2-ketobutyrate (HMKB). In the reductase reaction, this 2-ketoacid undergoes a metal-dependent reduction by NADPH to yield (R)-2,3-dihydroxy-isovalerate. The protein is Ketol-acid reductoisomerase (NADP(+)) of Campylobacter lari (strain RM2100 / D67 / ATCC BAA-1060).